The sequence spans 825 residues: Actin filament-associated protein 1-like 2 (825 aa).

The residue at position 56 (tyrosine 56) is a Phosphotyrosine. The disordered stretch occupies residues 62–163; it reads VNGEQNSASP…SKGKAAPYQW (102 aa). Residues 80-94 show a composition bias toward polar residues; that stretch reads PLTNGEPSQHSSAPQ. Phosphothreonine is present on threonine 113. PH domains follow at residues 175-271 and 353-447; these read DARI…EVSG and SLET…SESG. The residue at position 408 (serine 408) is a Phosphoserine. Tyrosine 413 is subject to Phosphotyrosine. Position 484 is a phosphoserine (serine 484). Positions 571–614 are disordered; the sequence is TLTVDPKPGTTPEEPHTESPGDPEVQQRQPEVQESSEPIEPTPR. A compositionally biased stretch (low complexity) spans 593-608; the sequence is PEVQQRQPEVQESSEP. Residues 657–754 are a coiled coil; the sequence is AEIKLGKNRT…VKDNLKKAEA (98 aa). The disordered stretch occupies residues 757 to 801; it reads VTLGTTVDTTHLDNMSPRPQPKAATPNPPPDSTPVNSASVLKNRP. Polar residues predominate over residues 759-769; it reads LGTTVDTTHLD.

In terms of assembly, interacts with SRC. Interacts with LCK when tyrosine phosphorylated. Tyrosine phosphorylated (by SRC).

Its subcellular location is the cytoplasm. Its function is as follows. May play a role in a signaling cascade by enhancing the kinase activity of SRC. Contributes to SRC-regulated transcription activation. This chain is Actin filament-associated protein 1-like 2 (Afap1l2), found in Mus musculus (Mouse).